The primary structure comprises 553 residues: Major facilitator-type transporter hxnZ (553 aa).

A run of 5 helical transmembrane segments spans residues F89–V109, V128–I148, P152–S172, F174–C194, and A213–L233. A glycan (N-linked (GlcNAc...) asparagine) is linked at N235. 7 helical membrane-spanning segments follow: residues Y257–F277, A366–L386, I409–L429, W433–K453, L459–M481, T496–A516, and P525–F545.

Belongs to the major facilitator superfamily.

It is found in the cell membrane. Functionally, major facilitator-type transporter, part of the hnx cluster involved in the purine degradation. The nicotinate hydroxylase hnxS accepts nicotinate as a substrate and catalyzes the first step of nicotinate catabolism. The major facilitator-type transporters hxnP and hxnZ are probably involved in the uptake of nicotinate-derived metabolites, and the oxidoreductases hxnT and hxnY in the further metabolism of 6-OH nicotinic acid. The protein is Major facilitator-type transporter hxnZ of Emericella nidulans (strain FGSC A4 / ATCC 38163 / CBS 112.46 / NRRL 194 / M139) (Aspergillus nidulans).